The following is a 625-amino-acid chain: tRNA (uracil-5-)-methyltransferase homolog A (625 aa).

2 disordered regions span residues 1 to 37 (MSEN…AAPA) and 145 to 165 (RPKA…EPPV). Low complexity predominate over residues 27–37 (PTVSVPPAAPA). The RRM domain occupies 73 to 146 (FKLELQNVPR…RPLSVRLARP (74 aa)). Positions 180–209 (YAEQLERKQLECEQVLQKLAKEIGSTNRAL) form a coiled coil. Serine 378 is modified (phosphoserine). S-adenosyl-L-methionine-binding residues include glutamine 411, glutamate 461, and aspartate 510. Cysteine 538 functions as the Nucleophile in the catalytic mechanism. Glutamate 581 (proton acceptor) is an active-site residue. The tract at residues 594-625 (GTGVLGPHSPPAQPTPGPPDNTLQETGTFPSS) is disordered. The span at 601-612 (HSPPAQPTPGPP) shows a compositional bias: pro residues. The residue at position 602 (serine 602) is a Phosphoserine. Residues 614–625 (NTLQETGTFPSS) are compositionally biased toward polar residues.

Belongs to the class I-like SAM-binding methyltransferase superfamily. RNA M5U methyltransferase family.

The protein resides in the cytoplasm. Its subcellular location is the cytosol. It carries out the reaction uridine(54) in tRNA + S-adenosyl-L-methionine = 5-methyluridine(54) in tRNA + S-adenosyl-L-homocysteine + H(+). The enzyme catalyses a uridine in mRNA + S-adenosyl-L-methionine = a 5-methyluridine in mRNA + S-adenosyl-L-homocysteine + H(+). Functionally, S-adenosyl-L-methionine-dependent methyltransferase that catalyzes the formation of 5-methyl-uridine in tRNAs and some mRNAs. Mainly catalyzes the methylation of uridine at position 54 (m5U54) in cytosolic tRNAs. Also able to mediate the formation of 5-methyl-uridine in some mRNAs. The polypeptide is tRNA (uracil-5-)-methyltransferase homolog A (Homo sapiens (Human)).